Reading from the N-terminus, the 241-residue chain is Pyridoxal phosphate phosphatase PHOSPHO2 (241 aa).

Asp8 serves as the catalytic Nucleophile. Residues Asp8 and Asp10 each coordinate Mg(2+). The Proton donor role is filled by Asp10. Substrate-binding residues include Asp19 and Asp99. Asp179 is a binding site for Mg(2+).

This sequence belongs to the HAD-like hydrolase superfamily. PHOSPHO family. The cofactor is Mg(2+).

The enzyme catalyses pyridoxal 5'-phosphate + H2O = pyridoxal + phosphate. Phosphatase that has high activity toward pyridoxal 5'-phosphate (PLP). Also active at much lower level toward pyrophosphate, phosphoethanolamine (PEA), phosphocholine (PCho), phospho-l-tyrosine, fructose-6-phosphate, p-nitrophenyl phosphate, and h-glycerophosphate. The protein is Pyridoxal phosphate phosphatase PHOSPHO2 (PHOSPHO2) of Bos taurus (Bovine).